The following is a 499-amino-acid chain: MTDTKTETTALSSDATEVRRQKLALLREQIGDVYPAHFHRTLSNAELAEKYADIEADVETGDTVTVAGRVYSSRNSGMFMDIHDASGKVQIFSHKDTTPEAARNLLPMIDIGDIIGVTGKVRRTKRGELTINAEEITMLTKSLLPMPEKWHGVSDIELRYRKRHLDILANEDSKLRFLQRSKILSGIRRFMEAEGFLEVETPMLQTVYGGATADPFKTFHNTLKMDMYLRIAPELFLKRTLVSGLSDKVFEINRNFRNEGVSTRHNPEFTMMECYWAYADYEDIMGLVERLFETLAIALHGTTEVEFQGQTISFKGPFKRVPMPDAVKEATGIDFLAIKTDEEARAAAKAAGFAVEKDWTWGECLAFIFEEKVEATLIQPSHVTHFPKDISPFAKEVPGEPRLVERFESYCNAWEVGNAFSELNDPEEQRRRMVEQLEQAHARGEKDKQLDDEFLDAIDQGMPPAGGLGIGVDRLIMLLTNAPSIRDVILFPARRNKAD.

Glu-408 and Glu-415 together coordinate Mg(2+).

It belongs to the class-II aminoacyl-tRNA synthetase family. Homodimer. Requires Mg(2+) as cofactor.

It is found in the cytoplasm. It catalyses the reaction tRNA(Lys) + L-lysine + ATP = L-lysyl-tRNA(Lys) + AMP + diphosphate. This chain is Lysine--tRNA ligase, found in Agrobacterium fabrum (strain C58 / ATCC 33970) (Agrobacterium tumefaciens (strain C58)).